Here is a 20-residue protein sequence, read N- to C-terminus: Chrysophsin-3 (20 aa).

Residue His-20 is modified to Histidine amide.

In terms of tissue distribution, gill.

It localises to the secreted. Has antibacterial activity against Gram-positive bacteria B.subtilis ATCC 6633, L.garvieae ATCC 49156 and S.iniae F-8502, and Gram-negative bacteria E.coli WT-2, V.anguillarum ATCC 19264, V.penaeicida KHA, V.harveyi ATCC 14126, V.vulnificus ATCC 33148, A.salmonicida NCMB 1102 and P.putida ATCC 12633. Has hemolytic activity against human red blood cells. Seems to disrupt the membranes by adopting an alpha helical conformation. May play a significant role in innate host defense. This chain is Chrysophsin-3, found in Pagrus major (Red sea bream).